A 289-amino-acid polypeptide reads, in one-letter code: 4-hydroxy-tetrahydrodipicolinate synthase (289 aa).

Residue Thr-44 participates in pyruvate binding. Tyr-130 (proton donor/acceptor) is an active-site residue. Lys-158 serves as the catalytic Schiff-base intermediate with substrate. Ile-200 provides a ligand contact to pyruvate.

This sequence belongs to the DapA family. Homotetramer; dimer of dimers.

It localises to the cytoplasm. The enzyme catalyses L-aspartate 4-semialdehyde + pyruvate = (2S,4S)-4-hydroxy-2,3,4,5-tetrahydrodipicolinate + H2O + H(+). Its pathway is amino-acid biosynthesis; L-lysine biosynthesis via DAP pathway; (S)-tetrahydrodipicolinate from L-aspartate: step 3/4. Functionally, catalyzes the condensation of (S)-aspartate-beta-semialdehyde [(S)-ASA] and pyruvate to 4-hydroxy-tetrahydrodipicolinate (HTPA). The polypeptide is 4-hydroxy-tetrahydrodipicolinate synthase (Archaeoglobus fulgidus (strain ATCC 49558 / DSM 4304 / JCM 9628 / NBRC 100126 / VC-16)).